A 242-amino-acid chain; its full sequence is uncharacterized protein (242 aa).

The S4 RNA-binding domain maps to 2–62 (EKAYKILSVQ…VEKPSVIFED (61 aa)). Aspartate 93 is an active-site residue.

Belongs to the pseudouridine synthase RluA family.

It carries out the reaction a uridine in RNA = a pseudouridine in RNA. This is an uncharacterized protein from Helicobacter pylori (strain ATCC 700392 / 26695) (Campylobacter pylori).